The chain runs to 564 residues: Serine/threonine-protein kinase PknA (564 aa).

The Protein kinase domain maps to 9-271; that stretch reads YRVIKTLGSG…TAREMLEALQ (263 aa). ATP-binding positions include 15–23 and lysine 40; that span reads LGSGGFGET. The active-site Proton acceptor is aspartate 139. The segment covering 360–406 has biased composition (polar residues); sequence QPVTQTTSLPSETTISNNDTPTVEPSPTDTPETPISQTVTQDPTPQA. The interval 360–458 is disordered; the sequence is QPVTQTTSLP…PVEATDRPSP (99 aa). Positions 428–445 are enriched in low complexity; that stretch reads TTEPTTSVPQPTTPSEPQ.

Belongs to the protein kinase superfamily. Ser/Thr protein kinase family.

It catalyses the reaction L-seryl-[protein] + ATP = O-phospho-L-seryl-[protein] + ADP + H(+). The catalysed reaction is L-threonyl-[protein] + ATP = O-phospho-L-threonyl-[protein] + ADP + H(+). Functionally, probably required for both normal cellular growth and differentiation. Inactivation of pknA leads to colonies that appear light green and rough in the absence of combined nitrogen. The protein is Serine/threonine-protein kinase PknA (pknA) of Nostoc sp. (strain PCC 7120 / SAG 25.82 / UTEX 2576).